A 616-amino-acid polypeptide reads, in one-letter code: Homeodomain-interacting protein kinase 4 (616 aa).

The region spanning 11–347 (YDIIEVLGKG…PSAALRHPFV (337 aa)) is the Protein kinase domain. Residues 17-25 (LGKGTFGEV) and Lys-40 contribute to the ATP site. Asp-136 functions as the Proton acceptor in the catalytic mechanism. Residues 486 to 616 (HKARKPPAGS…SFLQHVTGHH (131 aa)) form a disordered region. The segment covering 496–511 (KSDSNFSNLIRLSQVS) has biased composition (polar residues). Ser-511 carries the phosphoserine modification.

This sequence belongs to the protein kinase superfamily. CMGC Ser/Thr protein kinase family. HIPK subfamily. In terms of processing, autophosphorylated.

The protein localises to the cytoplasm. It catalyses the reaction L-seryl-[protein] + ATP = O-phospho-L-seryl-[protein] + ADP + H(+). The catalysed reaction is L-threonyl-[protein] + ATP = O-phospho-L-threonyl-[protein] + ADP + H(+). In terms of biological role, protein kinase that phosphorylates human TP53 at Ser-9, and thus induces TP53 repression of BIRC5 promoter. May act as a corepressor of transcription factors (Potential). This chain is Homeodomain-interacting protein kinase 4 (HIPK4), found in Homo sapiens (Human).